Here is a 429-residue protein sequence, read N- to C-terminus: Glutamate-1-semialdehyde 2,1-aminomutase (429 aa).

Lys-265 carries the N6-(pyridoxal phosphate)lysine modification.

Belongs to the class-III pyridoxal-phosphate-dependent aminotransferase family. HemL subfamily. In terms of assembly, homodimer. The cofactor is pyridoxal 5'-phosphate.

It localises to the cytoplasm. The enzyme catalyses (S)-4-amino-5-oxopentanoate = 5-aminolevulinate. It functions in the pathway porphyrin-containing compound metabolism; protoporphyrin-IX biosynthesis; 5-aminolevulinate from L-glutamyl-tRNA(Glu): step 2/2. The chain is Glutamate-1-semialdehyde 2,1-aminomutase from Ectopseudomonas mendocina (strain ymp) (Pseudomonas mendocina).